We begin with the raw amino-acid sequence, 810 residues long: Plasminogen (810 aa).

Positions 1–19 are cleaved as a signal peptide; the sequence is MEHKEVVLLLLLFLKSGQG. One can recognise a PAN domain in the interval 20-98; it reads EPLDDYVNTQ…RDVVLFEKKV (79 aa). 12 disulfides stabilise this stretch: cysteine 49-cysteine 73, cysteine 53-cysteine 61, cysteine 103-cysteine 181, cysteine 124-cysteine 164, cysteine 152-cysteine 176, cysteine 185-cysteine 262, cysteine 188-cysteine 316, cysteine 206-cysteine 245, cysteine 234-cysteine 257, cysteine 275-cysteine 352, cysteine 296-cysteine 335, and cysteine 324-cysteine 347. Kringle domains follow at residues 103-181, 184-262, and 275-352; these read CKTG…IPEC, ACMH…IPRC, and CLKG…IPSC. The disordered stretch occupies residues 126 to 145; that stretch reads KWSSTSPHRPRFSPATHPSE. Residues arginine 136, aspartate 158, and arginine 172 each coordinate L-lysine. Threonine 365 is a glycosylation site (O-linked (GalNAc...) threonine). 9 disulfide bridges follow: cysteine 377–cysteine 454, cysteine 398–cysteine 437, cysteine 426–cysteine 449, cysteine 481–cysteine 560, cysteine 502–cysteine 543, cysteine 531–cysteine 555, cysteine 567–cysteine 685, cysteine 577–cysteine 585, and cysteine 607–cysteine 623. Kringle domains follow at residues 377 to 454 and 481 to 560; these read CYHG…LKKC and CMFG…VPQC. L-lysine-binding residues include aspartate 432 and arginine 445. A Peptidase S1 domain is found at 581 to 808; the sequence is VVGGCVANAH…FVTWIEGVMR (228 aa). Residue serine 597 is modified to Phosphoserine. Active-site charge relay system residues include histidine 622 and aspartate 665. The residue at position 688 (serine 688) is a Phosphoserine. Intrachain disulfides connect cysteine 699/cysteine 766, cysteine 729/cysteine 745, and cysteine 756/cysteine 784. The active-site Charge relay system is the serine 760.

This sequence belongs to the peptidase S1 family. Plasminogen subfamily. As to quaternary structure, interacts with CSPG4 and AMOT. Interacts (via the Kringle domains) with HRG; the interaction tethers PLG to the cell surface and enhances its activation. Interacts (via Kringle 4 domain) with ADA; the interaction stimulates PLG activation when in complex with DPP4. Angiostatin: Interacts with ATP5F1A; the interaction inhibits most of the angiogenic effects of angiostatin. In terms of processing, in the presence of the inhibitor, the activation involves only cleavage after Arg-580, yielding two chains held together by two disulfide bonds. In the absence of the inhibitor, the activation involves additionally the removal of the activation peptide.

Its subcellular location is the secreted. The catalysed reaction is Preferential cleavage: Lys-|-Xaa &gt; Arg-|-Xaa, higher selectivity than trypsin. Converts fibrin into soluble products.. With respect to regulation, converted into plasmin by plasminogen activators, both plasminogen and its activator being bound to fibrin. Activated with catalytic amounts of streptokinase. Plasmin dissolves the fibrin of blood clots and acts as a proteolytic factor in a variety of other processes including embryonic development, tissue remodeling, tumor invasion, and inflammation. In ovulation, weakens the walls of the Graafian follicle. It activates the urokinase-type plasminogen activator, collagenases and several complement zymogens, such as C1, C4 and C5. Cleavage of fibronectin and laminin leads to cell detachment and apoptosis. Also cleaves fibrin, thrombospondin and von Willebrand factor. Its role in tissue remodeling and tumor invasion may be modulated by CSPG4. Binds to cells. This Pongo abelii (Sumatran orangutan) protein is Plasminogen (PLG).